A 1165-amino-acid polypeptide reads, in one-letter code: DNA-directed RNA polymerase subunit beta (1165 aa).

This sequence belongs to the RNA polymerase beta chain family. The RNAP catalytic core consists of 2 alpha, 1 beta, 1 beta' and 1 omega subunit. When a sigma factor is associated with the core the holoenzyme is formed, which can initiate transcription.

It carries out the reaction RNA(n) + a ribonucleoside 5'-triphosphate = RNA(n+1) + diphosphate. Functionally, DNA-dependent RNA polymerase catalyzes the transcription of DNA into RNA using the four ribonucleoside triphosphates as substrates. This Corynebacterium glutamicum (strain R) protein is DNA-directed RNA polymerase subunit beta.